The chain runs to 186 residues: UPF0301 protein Saro_0683 (186 aa).

The protein belongs to the UPF0301 (AlgH) family.

This chain is UPF0301 protein Saro_0683, found in Novosphingobium aromaticivorans (strain ATCC 700278 / DSM 12444 / CCUG 56034 / CIP 105152 / NBRC 16084 / F199).